The primary structure comprises 246 residues: Type III pantothenate kinase (246 aa).

Asp-6–Val-13 contacts ATP. Gly-103–Arg-106 is a binding site for substrate. The active-site Proton acceptor is Asp-105. Asp-125 lines the K(+) pocket. Thr-128 serves as a coordination point for ATP. Substrate is bound at residue Thr-179.

Belongs to the type III pantothenate kinase family. Homodimer. The cofactor is NH4(+). K(+) is required as a cofactor.

It is found in the cytoplasm. The enzyme catalyses (R)-pantothenate + ATP = (R)-4'-phosphopantothenate + ADP + H(+). It functions in the pathway cofactor biosynthesis; coenzyme A biosynthesis; CoA from (R)-pantothenate: step 1/5. Functionally, catalyzes the phosphorylation of pantothenate (Pan), the first step in CoA biosynthesis. The sequence is that of Type III pantothenate kinase from Thermotoga sp. (strain RQ2).